Here is a 178-residue protein sequence, read N- to C-terminus: Phosphopantetheine adenylyltransferase (178 aa).

A substrate-binding site is contributed by serine 8. ATP is bound by residues 8-9 (SF) and histidine 16. Substrate-binding residues include lysine 40, threonine 72, and arginine 86. ATP-binding positions include 87 to 89 (GLR), glutamate 97, and 122 to 128 (YSFLSSS).

This sequence belongs to the bacterial CoaD family. As to quaternary structure, homohexamer. The cofactor is Mg(2+).

It is found in the cytoplasm. It carries out the reaction (R)-4'-phosphopantetheine + ATP + H(+) = 3'-dephospho-CoA + diphosphate. The protein operates within cofactor biosynthesis; coenzyme A biosynthesis; CoA from (R)-pantothenate: step 4/5. Reversibly transfers an adenylyl group from ATP to 4'-phosphopantetheine, yielding dephospho-CoA (dPCoA) and pyrophosphate. The sequence is that of Phosphopantetheine adenylyltransferase from Picosynechococcus sp. (strain ATCC 27264 / PCC 7002 / PR-6) (Agmenellum quadruplicatum).